A 308-amino-acid chain; its full sequence is Homoserine O-acetyltransferase (308 aa).

The Acyl-thioester intermediate role is filled by Cys142. 2 residues coordinate substrate: Lys163 and Ser192. Residue His235 is the Proton acceptor of the active site. Glu237 is a catalytic residue. Arg249 lines the substrate pocket.

This sequence belongs to the MetA family.

It is found in the cytoplasm. The enzyme catalyses L-homoserine + acetyl-CoA = O-acetyl-L-homoserine + CoA. It functions in the pathway amino-acid biosynthesis; L-methionine biosynthesis via de novo pathway; O-acetyl-L-homoserine from L-homoserine: step 1/1. Its function is as follows. Transfers an acetyl group from acetyl-CoA to L-homoserine, forming acetyl-L-homoserine. The chain is Homoserine O-acetyltransferase from Agrobacterium fabrum (strain C58 / ATCC 33970) (Agrobacterium tumefaciens (strain C58)).